A 303-amino-acid polypeptide reads, in one-letter code: Acetylglutamate kinase (303 aa).

Residues 76 to 77, Arg98, and Asn199 each bind substrate; that span reads GG.

Belongs to the acetylglutamate kinase family. ArgB subfamily.

Its subcellular location is the cytoplasm. It catalyses the reaction N-acetyl-L-glutamate + ATP = N-acetyl-L-glutamyl 5-phosphate + ADP. It functions in the pathway amino-acid biosynthesis; L-arginine biosynthesis; N(2)-acetyl-L-ornithine from L-glutamate: step 2/4. Catalyzes the ATP-dependent phosphorylation of N-acetyl-L-glutamate. In Clavibacter sepedonicus (Clavibacter michiganensis subsp. sepedonicus), this protein is Acetylglutamate kinase.